The sequence spans 64 residues: Beta-defensin 1 (64 aa).

The signal sequence occupies residues Met-1–Gly-20. Residues Leu-21–Lys-23 constitute a propeptide that is removed on maturation. 3 disulfides stabilise this stretch: Cys-31–Cys-60, Cys-38–Cys-53, and Cys-43–Cys-61.

It belongs to the beta-defensin family. Monomer. Homodimer.

Its subcellular location is the secreted. The protein resides in the membrane. Functionally, has bactericidal activity. May act as a ligand for C-C chemokine receptor CCR6. Positively regulates the sperm motility and bactericidal activity in a CCR6-dependent manner. Binds to CCR6 and triggers Ca2+ mobilization in the sperm which is important for its motility. The protein is Beta-defensin 1 (DEFB1) of Sus scrofa (Pig).